The following is a 596-amino-acid chain: Meiosis-specific protein ASY1 (596 aa).

One can recognise an HORMA domain in the interval 15–228 (QDSLLLTRNL…SKHLVLTLKV (214 aa)). Residues 235-303 (CEDENDDMQD…NTQDPAENEQ (69 aa)) form a disordered region. Over residues 282 to 295 (QDDDDGEVDEDDNT) the composition is skewed to acidic residues. The region spanning 351–449 (SKTGKDMYIK…ASSNRRLGKR (99 aa)) is the SWIRM domain. The disordered stretch occupies residues 562 to 596 (TVNCSQASQDRRGRKTSMVREPILQYSKRQKSQAN).

Interacts with ASY3.

It localises to the chromosome. The protein resides in the nucleus. Required for normal meiosis in male and female gametophytes. Plays a crucial role in coordinating the activity of DMC1, a key member of the homologous recombination machinery. Acts at the interface between the developing chromosome axes and the recombination machinery to ensure DMC1-mediated interhomolog recombination. The chain is Meiosis-specific protein ASY1 from Arabidopsis thaliana (Mouse-ear cress).